Here is a 315-residue protein sequence, read N- to C-terminus: 3-oxoacyl-[acyl-carrier-protein] reductase 3, chloroplastic (315 aa).

The N-terminal 55 residues, 1–55 (MATTVAATKLTSLKAVKKLGFREIRQVRQWTPLQSSMPHFGSRQSFATSTVVKAQ), are a transit peptide targeting the chloroplast. An NADP(+)-binding site is contributed by 77–101 (VTGASRGIGKAIALSLGKAGCKVLV). Substrate is bound at residue serine 209. Tyrosine 222 (proton acceptor) is an active-site residue.

It belongs to the short-chain dehydrogenases/reductases (SDR) family. As to quaternary structure, homotetramer.

Its subcellular location is the plastid. It is found in the chloroplast. It carries out the reaction a (3R)-hydroxyacyl-[ACP] + NADP(+) = a 3-oxoacyl-[ACP] + NADPH + H(+). It participates in lipid metabolism; fatty acid biosynthesis. The protein is 3-oxoacyl-[acyl-carrier-protein] reductase 3, chloroplastic (bkr3) of Brassica napus (Rape).